The following is a 118-amino-acid chain: Cycloviolacin-O11 (118 aa).

The N-terminal stretch at Met-1–Ala-22 is a signal peptide. Residues Thr-23–Gly-84 constitute a propeptide that is removed on maturation. The cyclopeptide (Gly-Asn) cross-link spans Gly-85 to Asn-115. Cystine bridges form between Cys-89–Cys-105, Cys-93–Cys-107, and Cys-98–Cys-112. Residues Ser-116–Ala-118 constitute a propeptide that is removed on maturation.

Post-translationally, cycloviolacin-O11 is a cyclic peptide. Expressed in leaves, petals and petioles but not in roots and runners (at protein level).

Functionally, probably participates in a plant defense mechanism. This Viola odorata (Sweet violet) protein is Cycloviolacin-O11 (Voc2).